The sequence spans 398 residues: tRNA-specific 2-thiouridylase MnmA (398 aa).

Residues 33 to 40 (GMSGGVDS) and Met-59 contribute to the ATP site. Residues 119–121 (NPD) are interaction with target base in tRNA. The active-site Nucleophile is the Cys-124. An intrachain disulfide couples Cys-124 to Cys-226. Gly-148 provides a ligand contact to ATP. The tract at residues 176–178 (KDQ) is interaction with tRNA. Catalysis depends on Cys-226, which acts as the Cysteine persulfide intermediate. An interaction with tRNA region spans residues 343–344 (RY).

It belongs to the MnmA/TRMU family.

It localises to the cytoplasm. It catalyses the reaction S-sulfanyl-L-cysteinyl-[protein] + uridine(34) in tRNA + AH2 + ATP = 2-thiouridine(34) in tRNA + L-cysteinyl-[protein] + A + AMP + diphosphate + H(+). Catalyzes the 2-thiolation of uridine at the wobble position (U34) of tRNA, leading to the formation of s(2)U34. The polypeptide is tRNA-specific 2-thiouridylase MnmA (Psychrobacter sp. (strain PRwf-1)).